Here is a 502-residue protein sequence, read N- to C-terminus: ATP synthase subunit alpha 1/3 (502 aa).

169–176 (GDRQTGKT) is an ATP binding site.

Belongs to the ATPase alpha/beta chains family. In terms of assembly, F-type ATPases have 2 components, CF(1) - the catalytic core - and CF(0) - the membrane proton channel. CF(1) has five subunits: alpha(3), beta(3), gamma(1), delta(1), epsilon(1). CF(0) has three main subunits: a(1), b(2) and c(9-12). The alpha and beta chains form an alternating ring which encloses part of the gamma chain. CF(1) is attached to CF(0) by a central stalk formed by the gamma and epsilon chains, while a peripheral stalk is formed by the delta and b chains.

The protein resides in the cell inner membrane. It catalyses the reaction ATP + H2O + 4 H(+)(in) = ADP + phosphate + 5 H(+)(out). Its function is as follows. Produces ATP from ADP in the presence of a proton gradient across the membrane. The alpha chain is a regulatory subunit. The sequence is that of ATP synthase subunit alpha 1/3 from Syntrophotalea carbinolica (strain DSM 2380 / NBRC 103641 / GraBd1) (Pelobacter carbinolicus).